A 295-amino-acid polypeptide reads, in one-letter code: Virginiamycin B lyase (295 aa).

Residue H227 participates in substrate binding. Residue E267 coordinates Mg(2+). Catalysis depends on H269, which acts as the Proton acceptor. E284 serves as a coordination point for Mg(2+).

It belongs to the Vgb family. As to quaternary structure, monomer. It depends on Mg(2+) as a cofactor.

Inactivates the type B streptogramin antibiotics by linearizing the lactone ring at the ester linkage, generating a free phenylglycine carboxylate and converting the threonyl moiety into 2-amino-butenoic acid. This Bacillus licheniformis (strain ATCC 14580 / DSM 13 / JCM 2505 / CCUG 7422 / NBRC 12200 / NCIMB 9375 / NCTC 10341 / NRRL NRS-1264 / Gibson 46) protein is Virginiamycin B lyase.